The chain runs to 367 residues: Probable dual-specificity RNA methyltransferase RlmN (367 aa).

Glu-92 acts as the Proton acceptor in catalysis. The 229-residue stretch at 98–326 folds into the Radical SAM core domain; the sequence is QEYGLSVCVT…YDTLKKNGIN (229 aa). The cysteines at positions 105 and 341 are disulfide-linked. Cys-112, Cys-116, and Cys-119 together coordinate [4Fe-4S] cluster. S-adenosyl-L-methionine contacts are provided by residues 164–165, Ser-196, 219–221, and Asn-297; these read GE and SLH. Cys-341 serves as the catalytic S-methylcysteine intermediate.

The protein belongs to the radical SAM superfamily. RlmN family. It depends on [4Fe-4S] cluster as a cofactor.

It is found in the cytoplasm. It carries out the reaction adenosine(2503) in 23S rRNA + 2 reduced [2Fe-2S]-[ferredoxin] + 2 S-adenosyl-L-methionine = 2-methyladenosine(2503) in 23S rRNA + 5'-deoxyadenosine + L-methionine + 2 oxidized [2Fe-2S]-[ferredoxin] + S-adenosyl-L-homocysteine. The catalysed reaction is adenosine(37) in tRNA + 2 reduced [2Fe-2S]-[ferredoxin] + 2 S-adenosyl-L-methionine = 2-methyladenosine(37) in tRNA + 5'-deoxyadenosine + L-methionine + 2 oxidized [2Fe-2S]-[ferredoxin] + S-adenosyl-L-homocysteine. In terms of biological role, specifically methylates position 2 of adenine 2503 in 23S rRNA and position 2 of adenine 37 in tRNAs. This is Probable dual-specificity RNA methyltransferase RlmN from Listeria welshimeri serovar 6b (strain ATCC 35897 / DSM 20650 / CCUG 15529 / CIP 8149 / NCTC 11857 / SLCC 5334 / V8).